The primary structure comprises 304 residues: Small glutamine-rich tetratricopeptide repeat-containing protein beta (304 aa).

TPR repeat units follow at residues 15 to 49 (LREQ…SPED), 85 to 118 (ADQL…DPNN), 120 to 152 (VYYC…DSKY), and 153 to 186 (SKAY…DPEN). K131 carries the post-translational modification N6-acetyllysine. Phosphoserine occurs at positions 293, 295, and 297.

It belongs to the SGT family. As to quaternary structure, homooligomerize.

Functionally, co-chaperone that binds directly to HSC70 and HSP70 and regulates their ATPase activity. The sequence is that of Small glutamine-rich tetratricopeptide repeat-containing protein beta (Sgtb) from Mus musculus (Mouse).